The chain runs to 393 residues: Flavohemoprotein (393 aa).

The Globin domain maps to 1 to 139 (MLSAEHRAIV…LADLLIGLEE (139 aa)). Residue histidine 85 coordinates heme b. Active-site charge relay system residues include tyrosine 95 and glutamate 138. Residues 150–393 (GGWRGTRAFV…EFFGPASALD (244 aa)) are reductase. The 104-residue stretch at 153–256 (RGTRAFVVAR…LTPSGDFTLE (104 aa)) folds into the FAD-binding FR-type domain. FAD contacts are provided by residues tyrosine 191 and 205–208 (RNYS). 268-273 (GVGITP) contacts NADP(+). 385–388 (FFGP) provides a ligand contact to FAD.

It belongs to the globin family. Two-domain flavohemoproteins subfamily. In the C-terminal section; belongs to the flavoprotein pyridine nucleotide cytochrome reductase family. Heme b serves as cofactor. The cofactor is FAD.

The enzyme catalyses 2 nitric oxide + NADPH + 2 O2 = 2 nitrate + NADP(+) + H(+). It catalyses the reaction 2 nitric oxide + NADH + 2 O2 = 2 nitrate + NAD(+) + H(+). Functionally, is involved in NO detoxification in an aerobic process, termed nitric oxide dioxygenase (NOD) reaction that utilizes O(2) and NAD(P)H to convert NO to nitrate, which protects the bacterium from various noxious nitrogen compounds. Therefore, plays a central role in the inducible response to nitrosative stress. This is Flavohemoprotein from Burkholderia sp. (strain TH2).